The sequence spans 447 residues: Mannose/glucose-specific lectin (447 aa).

Jacalin-type lectin domains are found at residues M5–P148, T153–P294, and S300–P443.

The protein belongs to the jacalin lectin family. In terms of tissue distribution, expressed in seeds (at protein level).

With respect to regulation, hemagglutinating activity is slightly inhibited by alpha-methyl-D-mannopyranoside. Its function is as follows. D-mannose/D-glucose-binding lectin that also binds derivatives N-acetyl-D-glucosamine and alpha-methyl-D-mannopyranoside. Does not bind D-galactose, L-Rhamnose, D-fructose, lactose or glycoproteins fetiun and mucin. Shows agglutinating activity towards human and rabbit erythrocytes. Also displays antimicrobial activity against L.infantum. The protein is Mannose/glucose-specific lectin of Parkia pendula (Inga pendula).